Reading from the N-terminus, the 627-residue chain is Plasmepsin IX (627 aa).

The Cytoplasmic portion of the chain corresponds to 1–13 (MFFINFKKIKKKQ). Residues 14 to 34 (FPIYLTQHRIITVFLIFIYFI) form a helical; Signal-anchor for type II membrane protein membrane-spanning segment. At 35 to 627 (NLKDCFHINN…SSLHNKINNL (593 aa)) the chain is on the lumenal side. Residues 228–605 (YVGYIQIGTP…NNNSSYVGIA (378 aa)) form the Peptidase A1 domain. Residues D246 and D495 contribute to the active site.

Belongs to the peptidase A1 family. In terms of processing, autocleaved into a p55 mature form.

The protein resides in the membrane. Its subcellular location is the cytoplasmic vesicle. The protein localises to the secretory vesicle. It localises to the rhoptry. Its activity is regulated as follows. Inhibited by small molecule 49c. Inhibited by small molecule WM382. Functionally, during the asexual blood stage, initiates the proteolytic maturation of several rhoptry proteins and thus, is required for merozoite invasion of host erythrocytes and probably the subsequent development of the ring-stage. Cleaves rhoptry associated protein 1 RAP1 and apical sushi protein ASP during schizont maturation. Also cleaves rhoptry protein RON3. This chain is Plasmepsin IX, found in Plasmodium falciparum (isolate 3D7).